We begin with the raw amino-acid sequence, 94 residues long: Large ribosomal subunit protein bL25 (94 aa).

This sequence belongs to the bacterial ribosomal protein bL25 family. In terms of assembly, part of the 50S ribosomal subunit; part of the 5S rRNA/L5/L18/L25 subcomplex. Contacts the 5S rRNA. Binds to the 5S rRNA independently of L5 and L18.

Its function is as follows. This is one of the proteins that binds to the 5S RNA in the ribosome where it forms part of the central protuberance. The polypeptide is Large ribosomal subunit protein bL25 (Salmonella arizonae (strain ATCC BAA-731 / CDC346-86 / RSK2980)).